We begin with the raw amino-acid sequence, 209 residues long: Large ribosomal subunit protein uL3 (209 aa).

Residues 141–163 are disordered; the sequence is RAVGSMGASSDPSRTFKNKRMPG.

This sequence belongs to the universal ribosomal protein uL3 family. As to quaternary structure, part of the 50S ribosomal subunit. Forms a cluster with proteins L14 and L19.

One of the primary rRNA binding proteins, it binds directly near the 3'-end of the 23S rRNA, where it nucleates assembly of the 50S subunit. The protein is Large ribosomal subunit protein uL3 of Clostridium botulinum (strain Kyoto / Type A2).